The chain runs to 186 residues: Ribosome-recycling factor (186 aa).

The protein belongs to the RRF family.

Its subcellular location is the cytoplasm. In terms of biological role, responsible for the release of ribosomes from messenger RNA at the termination of protein biosynthesis. May increase the efficiency of translation by recycling ribosomes from one round of translation to another. This chain is Ribosome-recycling factor, found in Bacteroides fragilis (strain ATCC 25285 / DSM 2151 / CCUG 4856 / JCM 11019 / LMG 10263 / NCTC 9343 / Onslow / VPI 2553 / EN-2).